Consider the following 418-residue polypeptide: Transmembrane protease serine 11A (418 aa).

The Cytoplasmic segment spans residues 1–18 (MMYRTVGFGTRSRNLKPW). Residues 19–39 (MIAVLIVLSLTVVAVTIGLLV) form a helical; Signal-anchor for type II membrane protein membrane-spanning segment. At 40 to 418 (HFLVFDQKKE…RNWIASKTGI (379 aa)) the chain is on the extracellular side. The region spanning 47–164 (KKEYYHGSFK…SSVQVNAMSS (118 aa)) is the SEA domain. A glycan (N-linked (GlcNAc...) asparagine) is linked at asparagine 153. The 231-residue stretch at 187–417 (IASGVIAPKA…YRNWIASKTG (231 aa)) folds into the Peptidase S1 domain. Cysteines 212 and 228 form a disulfide. Active-site charge relay system residues include histidine 227 and aspartate 272. Asparagine 303 carries an N-linked (GlcNAc...) asparagine glycan. 2 disulfides stabilise this stretch: cysteine 337–cysteine 353 and cysteine 364–cysteine 393. Serine 368 (charge relay system) is an active-site residue.

It belongs to the peptidase S1 family. As to quaternary structure, may interact with ZBTB17. Expressed in esophagus, liver, colon and lung. Down-regulated in esophagus cancers.

It localises to the membrane. Its function is as follows. Probable serine protease which may play a role in cellular senescence. Overexpression inhibits cell growth and induce G1 cell cycle arrest. The protein is Transmembrane protease serine 11A (TMPRSS11A) of Homo sapiens (Human).